Consider the following 178-residue polypeptide: MVSRVAKNPIKIPTGVEVNVAGQQITVKGKLGTLTRVIHRAVKVTKTDAELQTICANDSPGSNALAGTARAVLANMVQGVHTGFQRKLVMVGVGYRAKAEDKKLNLTVGLSHPVNIEMPEGITVETPSQTEIIVKGADKQRVSQVAANIREIRPPEPYKGKGIRYDNERVILKEAKKK.

It belongs to the universal ribosomal protein uL6 family. In terms of assembly, part of the 50S ribosomal subunit.

This protein binds to the 23S rRNA, and is important in its secondary structure. It is located near the subunit interface in the base of the L7/L12 stalk, and near the tRNA binding site of the peptidyltransferase center. The chain is Large ribosomal subunit protein uL6 from Coxiella burnetii (strain CbuG_Q212) (Coxiella burnetii (strain Q212)).